The chain runs to 148 residues: FAD synthase (148 aa).

Residues 14–15 (VF), 19–22 (HVGH), and aspartate 100 contribute to the ATP site.

Belongs to the archaeal FAD synthase family. In terms of assembly, homodimer. Requires a divalent metal cation as cofactor.

The enzyme catalyses FMN + ATP + H(+) = FAD + diphosphate. Its pathway is cofactor biosynthesis; FAD biosynthesis; FAD from FMN: step 1/1. In terms of biological role, catalyzes the transfer of the AMP portion of ATP to flavin mononucleotide (FMN) to produce flavin adenine dinucleotide (FAD) coenzyme. The polypeptide is FAD synthase (Pyrococcus abyssi (strain GE5 / Orsay)).